The sequence spans 249 residues: Exosome complex component Rrp41 (249 aa).

This sequence belongs to the RNase PH family. Rrp41 subfamily. Component of the archaeal exosome complex. Forms a hexameric ring-like arrangement composed of 3 Rrp41-Rrp42 heterodimers. The hexameric ring associates with a trimer of Rrp4 and/or Csl4 subunits.

The protein resides in the cytoplasm. Its function is as follows. Catalytic component of the exosome, which is a complex involved in RNA degradation. Has 3'-&gt;5' exoribonuclease activity. Can also synthesize heteromeric RNA-tails. This Thermococcus kodakarensis (strain ATCC BAA-918 / JCM 12380 / KOD1) (Pyrococcus kodakaraensis (strain KOD1)) protein is Exosome complex component Rrp41.